The chain runs to 351 residues: Phosphate acyltransferase (351 aa).

Belongs to the PlsX family. In terms of assembly, homodimer. Probably interacts with PlsY.

It localises to the cytoplasm. The enzyme catalyses a fatty acyl-[ACP] + phosphate = an acyl phosphate + holo-[ACP]. It functions in the pathway lipid metabolism; phospholipid metabolism. Functionally, catalyzes the reversible formation of acyl-phosphate (acyl-PO(4)) from acyl-[acyl-carrier-protein] (acyl-ACP). This enzyme utilizes acyl-ACP as fatty acyl donor, but not acyl-CoA. The protein is Phosphate acyltransferase of Gloeothece citriformis (strain PCC 7424) (Cyanothece sp. (strain PCC 7424)).